A 468-amino-acid chain; its full sequence is Methylenetetrahydrofolate--tRNA-(uracil-5-)-methyltransferase TrmFO (468 aa).

FAD is bound at residue 13–18 (GGGLAG).

The protein belongs to the MnmG family. TrmFO subfamily. Requires FAD as cofactor.

Its subcellular location is the cytoplasm. It catalyses the reaction uridine(54) in tRNA + (6R)-5,10-methylene-5,6,7,8-tetrahydrofolate + NADH + H(+) = 5-methyluridine(54) in tRNA + (6S)-5,6,7,8-tetrahydrofolate + NAD(+). The enzyme catalyses uridine(54) in tRNA + (6R)-5,10-methylene-5,6,7,8-tetrahydrofolate + NADPH + H(+) = 5-methyluridine(54) in tRNA + (6S)-5,6,7,8-tetrahydrofolate + NADP(+). In terms of biological role, catalyzes the folate-dependent formation of 5-methyl-uridine at position 54 (M-5-U54) in all tRNAs. The protein is Methylenetetrahydrofolate--tRNA-(uracil-5-)-methyltransferase TrmFO of Bartonella henselae (strain ATCC 49882 / DSM 28221 / CCUG 30454 / Houston 1) (Rochalimaea henselae).